A 276-amino-acid polypeptide reads, in one-letter code: Nickel import system permease protein NikC (276 aa).

The next 5 helical transmembrane spans lie at 10–30 (LIFF…FFVS), 73–93 (LFVT…LGLF), 108–128 (FIDV…ASFF), 186–206 (IIPA…LYIS), and 238–258 (IMLI…NLTG). In terms of domain architecture, ABC transmembrane type-1 spans 69-258 (ARSTLFVTVL…ITILIFNLTG (190 aa)).

Belongs to the binding-protein-dependent transport system permease family. OppBC subfamily. The complex is composed of two ATP-binding proteins (NikD and NikE), two transmembrane proteins (NikB and NikC) and a solute-binding protein (NikA).

The protein localises to the cell membrane. In terms of biological role, part of the ABC transporter complex NikABCDE (Opp2) involved in nickel import. Probably responsible for the translocation of the substrate across the membrane. This Staphylococcus aureus (strain bovine RF122 / ET3-1) protein is Nickel import system permease protein NikC.